The chain runs to 337 residues: GTP 3',8-cyclase (337 aa).

The Radical SAM core domain maps to 17 to 243; the sequence is PFQRQYYYLR…HKSHTDGPAK (227 aa). A GTP-binding site is contributed by Arg26. Residues Cys33 and Cys37 each coordinate [4Fe-4S] cluster. Residue Tyr39 coordinates S-adenosyl-L-methionine. Cys40 lines the [4Fe-4S] cluster pocket. Arg76 is a GTP binding site. Gly80 serves as a coordination point for S-adenosyl-L-methionine. Thr107 is a GTP binding site. S-adenosyl-L-methionine is bound at residue Ser131. Residue Lys168 participates in GTP binding. Met202 provides a ligand contact to S-adenosyl-L-methionine. Positions 265 and 268 each coordinate [4Fe-4S] cluster. 270–272 contacts GTP; that stretch reads RLR. Cys282 serves as a coordination point for [4Fe-4S] cluster.

The protein belongs to the radical SAM superfamily. MoaA family. As to quaternary structure, monomer and homodimer. Requires [4Fe-4S] cluster as cofactor.

It carries out the reaction GTP + AH2 + S-adenosyl-L-methionine = (8S)-3',8-cyclo-7,8-dihydroguanosine 5'-triphosphate + 5'-deoxyadenosine + L-methionine + A + H(+). It participates in cofactor biosynthesis; molybdopterin biosynthesis. In terms of biological role, catalyzes the cyclization of GTP to (8S)-3',8-cyclo-7,8-dihydroguanosine 5'-triphosphate. In Haemophilus influenzae (strain ATCC 51907 / DSM 11121 / KW20 / Rd), this protein is GTP 3',8-cyclase.